The sequence spans 262 residues: Transmembrane protein 81 (262 aa).

The signal sequence occupies residues 1–30; it reads MKAVATVFICGSLVLITYLPLVVTSPQTLA. Topologically, residues 31–225 are extracellular; the sequence is IPEKLRQAVG…HLPGWRKKVS (195 aa). A glycan (N-linked (GlcNAc...) asparagine) is linked at asparagine 45. The Ig-like domain occupies 83–171; the sequence is TNWICGMLHF…VQQLKNLKLV (89 aa). Cysteine 104 and cysteine 160 are disulfide-bonded. N-linked (GlcNAc...) asparagine glycosylation occurs at asparagine 211. A helical membrane pass occupies residues 226 to 246; the sequence is LALGVGIAAGVVGGVLVNVAL. At 247–262 the chain is on the cytoplasmic side; the sequence is CRVLGGTGGNGNLSSL.

As to quaternary structure, forms a complex with IZUMO1 and SPACA6 on spermatocyte cell membrane required for fertilization.

It localises to the cell membrane. Essential fertilization factor required for male fertility. Part of a conserved trimeric sperm complex with the essential fertilization factors IZUMO1 and SPACA6 which bridges sperm and oocyte membranes during fertilization by binding to IZUMO1R/JUNO on the oocyte. This Rattus norvegicus (Rat) protein is Transmembrane protein 81 (Tmem81).